A 453-amino-acid chain; its full sequence is tRNA modification GTPase MnmE (453 aa).

(6S)-5-formyl-5,6,7,8-tetrahydrofolate contacts are provided by Arg-22, Glu-79, and Lys-119. The TrmE-type G domain occupies 215–376 (GMKVVIAGRP…LKQHLKSLMG (162 aa)). Residue Asn-225 participates in K(+) binding. GTP-binding positions include 225-230 (NAGKSS), 244-250 (TEIAGTT), 269-272 (DTAG), and 334-337 (NKAD). Residue Ser-229 coordinates Mg(2+). Thr-244, Ile-246, and Thr-249 together coordinate K(+). Mg(2+) is bound at residue Thr-250. Lys-453 contacts (6S)-5-formyl-5,6,7,8-tetrahydrofolate.

This sequence belongs to the TRAFAC class TrmE-Era-EngA-EngB-Septin-like GTPase superfamily. TrmE GTPase family. Homodimer. Heterotetramer of two MnmE and two MnmG subunits. It depends on K(+) as a cofactor.

Its subcellular location is the cytoplasm. Functionally, exhibits a very high intrinsic GTPase hydrolysis rate. Involved in the addition of a carboxymethylaminomethyl (cmnm) group at the wobble position (U34) of certain tRNAs, forming tRNA-cmnm(5)s(2)U34. The polypeptide is tRNA modification GTPase MnmE (Shewanella pealeana (strain ATCC 700345 / ANG-SQ1)).